A 127-amino-acid polypeptide reads, in one-letter code: Fumarate reductase subunit C (127 aa).

The next 3 helical transmembrane spans lie at 30-50, 58-78, and 107-127; these read ATVL…GSLV, GWLS…ALLG, and IIVL…LMVV.

Belongs to the FrdC family. Part of an enzyme complex containing four subunits: a flavoprotein (FrdA), an iron-sulfur protein (FrdB), and two hydrophobic anchor proteins (FrdC and FrdD).

It localises to the cell inner membrane. Its function is as follows. Anchors the catalytic components of the fumarate reductase complex to the cell membrane, binds quinones. This is Fumarate reductase subunit C from Vibrio atlanticus (strain LGP32) (Vibrio splendidus (strain Mel32)).